A 796-amino-acid polypeptide reads, in one-letter code: MGDGALIVAVAIKGNNSKTKGVVRWALQEFASQEHVVFKLLHVQPRDSNSVSTTRKDLTTSVYKKDVDRKTREMLLPSRDMFVHREVQLDIMVLESDDIADAISKAVQDHGISELVIGASSSIIFSWKLKRSNLSSRIADATPRFCSVHVISKGKLLNVRKSDMDTETSIADDRSESRFSSDSHSGTVSSTSSHQFSSTPLLFQRIQALTTVNQKVGTNIGKQNNEPHHHHHNRAGSLDVDESKLLNQKGFYRTSSSGIGYGGSDISSWRSSQMEEASSSSTYSDPTSSSSQIHKDFELEKLKIELRHIKGMYAVAQSEVIDASKKMQDLNQRRSEEATRLKNLTIREEEADEVVEMERERQEDAENEAELVRECIERETEERLEAEARAEEVRKEKQRLEDALEGGPLQRQQYMKFEWEEIVEATSSFSDELKIGVGGYGSVYRCNLHHTTVAVKVLHSDKSSLTKQFHQELEILSKIRHPHLLLLLGACPERGSLVYEYMHNGSLEERLMKRRPNVDTPQPPPLRWFERFRIAWEIASALYFLHTNEPRPIVHRDLKPANILLDRNNVSKIGDVGLSKMVNLDPSHASTVFNETGPVGTFFYIDPEYQRTGVVTPESDIYAFGIILLQLVTARSAMGLAHSIEKALRDQTGKFTEILDKTAGDWPVKEAKEMVMIGLRCAEMRKRDRPDLGKEILPVLERLKEVASIARNMFADNLIDHHHNAPTHFYCPITKDVMENPCVASDGYTYEKRAIKEWLQKNHKSPMTDLPFPSDSLLPNHSLLSAIKEWRSQLIK.

Disordered regions lie at residues 163–195 (DMDTETSIADDRSESRFSSDSHSGTVSSTSSHQ), 218–240 (TNIGKQNNEPHHHHHNRAGSLDV), and 270–292 (RSSQMEEASSSSTYSDPTSSSSQ). A compositionally biased stretch (basic and acidic residues) spans 171–181 (ADDRSESRFSS). Low complexity predominate over residues 182–195 (DSHSGTVSSTSSHQ). The span at 270–291 (RSSQMEEASSSSTYSDPTSSSS) shows a compositional bias: low complexity. Residues 298–407 (ELEKLKIELR…QRLEDALEGG (110 aa)) adopt a coiled-coil conformation. Residues 429-700 (FSDELKIGVG…DLGKEILPVL (272 aa)) enclose the Protein kinase domain. ATP contacts are provided by residues 435 to 443 (IGVGGYGSV) and Lys-456. Catalysis depends on Asp-557, which acts as the Proton acceptor. The U-box domain maps to 724-796 (NAPTHFYCPI…IKEWRSQLIK (73 aa)).

It belongs to the protein kinase superfamily. Ser/Thr protein kinase family.

The enzyme catalyses L-seryl-[protein] + ATP = O-phospho-L-seryl-[protein] + ADP + H(+). The catalysed reaction is L-threonyl-[protein] + ATP = O-phospho-L-threonyl-[protein] + ADP + H(+). It catalyses the reaction S-ubiquitinyl-[E2 ubiquitin-conjugating enzyme]-L-cysteine + [acceptor protein]-L-lysine = [E2 ubiquitin-conjugating enzyme]-L-cysteine + N(6)-ubiquitinyl-[acceptor protein]-L-lysine.. It participates in protein modification; protein ubiquitination. In terms of biological role, functions as an E3 ubiquitin ligase. The sequence is that of U-box domain-containing protein 51 (PUB51) from Arabidopsis thaliana (Mouse-ear cress).